The sequence spans 363 residues: tRNA dimethylallyltransferase (363 aa).

65-72 (GPTASGKS) lines the ATP pocket. Residue 67–72 (TASGKS) participates in substrate binding. Interaction with substrate tRNA stretches follow at residues 90–93 (DSMQ) and 214–218 (QRLIR).

Belongs to the IPP transferase family. Monomer. Mg(2+) is required as a cofactor.

The catalysed reaction is adenosine(37) in tRNA + dimethylallyl diphosphate = N(6)-dimethylallyladenosine(37) in tRNA + diphosphate. Catalyzes the transfer of a dimethylallyl group onto the adenine at position 37 in tRNAs that read codons beginning with uridine, leading to the formation of N6-(dimethylallyl)adenosine (i(6)A). The sequence is that of tRNA dimethylallyltransferase from Rickettsia rickettsii (strain Sheila Smith).